The following is a 369-amino-acid chain: Glutamine synthetase (369 aa).

One can recognise a GS beta-grasp domain in the interval 23 to 102; sequence VIAEYIWVDS…VLAECWNNDG (80 aa). The GS catalytic domain occupies 109-369; sequence HRHEAAKLFE…MSKEFERESS (261 aa).

This sequence belongs to the glutamine synthetase family. As to quaternary structure, homooctamer.

It localises to the cytoplasm. The catalysed reaction is L-glutamate + NH4(+) + ATP = L-glutamine + ADP + phosphate + H(+). The polypeptide is Glutamine synthetase (GLN1) (Eremothecium gossypii (strain ATCC 10895 / CBS 109.51 / FGSC 9923 / NRRL Y-1056) (Yeast)).